The primary structure comprises 300 residues: tRNA dimethylallyltransferase (300 aa).

8-15 (GASASGKS) provides a ligand contact to ATP. 10 to 15 (SASGKS) contacts substrate. The segment at 33–36 (DSLS) is interaction with substrate tRNA.

It belongs to the IPP transferase family. In terms of assembly, monomer. Requires Mg(2+) as cofactor.

It catalyses the reaction adenosine(37) in tRNA + dimethylallyl diphosphate = N(6)-dimethylallyladenosine(37) in tRNA + diphosphate. Functionally, catalyzes the transfer of a dimethylallyl group onto the adenine at position 37 in tRNAs that read codons beginning with uridine, leading to the formation of N6-(dimethylallyl)adenosine (i(6)A). The polypeptide is tRNA dimethylallyltransferase (Wolinella succinogenes (strain ATCC 29543 / DSM 1740 / CCUG 13145 / JCM 31913 / LMG 7466 / NCTC 11488 / FDC 602W) (Vibrio succinogenes)).